The sequence spans 711 residues: Polyribonucleotide nucleotidyltransferase (711 aa).

Positions 489 and 495 each coordinate Mg(2+). The region spanning 556 to 615 is the KH domain; sequence PRIHTIKISPDKIKDVIGKGGSVIRALTEETGTTIEIEDDGTVKIAATDGEKAKHAIRRI. An S1 motif domain is found at 625–693; the sequence is GRIYNGKVTR…RQGRVRLSIK (69 aa).

The protein belongs to the polyribonucleotide nucleotidyltransferase family. In terms of assembly, component of the RNA degradosome, which is a multiprotein complex involved in RNA processing and mRNA degradation. Mg(2+) is required as a cofactor.

The protein localises to the cytoplasm. The catalysed reaction is RNA(n+1) + phosphate = RNA(n) + a ribonucleoside 5'-diphosphate. Functionally, involved in mRNA degradation. Catalyzes the phosphorolysis of single-stranded polyribonucleotides processively in the 3'- to 5'-direction. This Cronobacter sakazakii (strain ATCC BAA-894) (Enterobacter sakazakii) protein is Polyribonucleotide nucleotidyltransferase.